Here is a 365-residue protein sequence, read N- to C-terminus: Heat-inducible transcription repressor HrcA (365 aa).

This sequence belongs to the HrcA family.

In terms of biological role, negative regulator of class I heat shock genes (grpE-dnaK-dnaJ and groELS operons). Prevents heat-shock induction of these operons. This is Heat-inducible transcription repressor HrcA from Trichormus variabilis (strain ATCC 29413 / PCC 7937) (Anabaena variabilis).